The following is a 595-amino-acid chain: Actin-histidine N-methyltransferase (595 aa).

The disordered stretch occupies residues 1 to 22 (MGKKSRVKTQKSGTGATATVSP). Over residues 10–20 (QKSGTGATATV) the composition is skewed to polar residues. S-adenosyl-L-methionine contacts are provided by residues R75, 104 to 106 (EGF), R254, 275 to 279 (DMCNH), and 325 to 327 (SGF). In terms of domain architecture, SET spans 94–314 (EGFEMVNFKE…AGEQIYIFYG (221 aa)). S513 is modified (phosphoserine). Positions 549 to 572 (ENGLVNGENSVPNGTRSENENLNQ) are enriched in polar residues. Residues 549–595 (ENGLVNGENSVPNGTRSENENLNQEESKRAVEDAKGSSSDNTAEVKE) form a disordered region. A compositionally biased stretch (basic and acidic residues) spans 573–583 (EESKRAVEDAK). Residues 584-595 (GSSSDNTAEVKE) are compositionally biased toward polar residues.

The protein belongs to the class V-like SAM-binding methyltransferase superfamily. SETD3 actin-histidine methyltransferase family. In terms of assembly, interacts with MYOD1. In terms of processing, phosphorylated by GSK3B, which is required for recognition by the SCF(FBXW7) complex and subsequent degradation. Post-translationally, ubiquitinated by the SCF(FBXW7) complex following phosphorylation by GSK3B, leading to its degradation by the proteasome.

It localises to the cytoplasm. It is found in the nucleus. It catalyses the reaction L-histidyl-[protein] + S-adenosyl-L-methionine = N(tele)-methyl-L-histidyl-[protein] + S-adenosyl-L-homocysteine + H(+). Its function is as follows. Protein-histidine N-methyltransferase that specifically mediates 3-methylhistidine (tele-methylhistidine) methylation of actin at 'His-73'. Histidine methylation of actin is required for smooth muscle contraction of the laboring uterus during delivery. Does not have protein-lysine N-methyltransferase activity and probably only catalyzes histidine methylation of actin. This Papio anubis (Olive baboon) protein is Actin-histidine N-methyltransferase.